Reading from the N-terminus, the 375-residue chain is Saccharopine dehydrogenase [NAD(+), L-lysine-forming] (375 aa).

The L-saccharopine site is built by Arg18 and Lys78. Lys78 acts as the Proton acceptor in catalysis. Residue His96 is the Proton donor of the active site. Residue Gln101 participates in L-saccharopine binding. Arg130 contributes to the NAD(+) binding site. Arg131 and Phe135 together coordinate L-saccharopine. NAD(+) contacts are provided by residues 203–204 (GR), Asp227, Thr231, Tyr252, and Val279. Cysteines 205 and 250 form a disulfide. 280–282 (SAD) provides a ligand contact to L-saccharopine. NAD(+) is bound at residue 322 to 325 (IDHL).

Belongs to the AlaDH/PNT family. Monomer.

It carries out the reaction L-saccharopine + NAD(+) + H2O = L-lysine + 2-oxoglutarate + NADH + H(+). The protein operates within amino-acid biosynthesis; L-lysine biosynthesis via AAA pathway; L-lysine from L-alpha-aminoadipate (fungal route): step 3/3. Its function is as follows. Catalyzes the NAD(+)-dependent cleavage of saccharopine to L-lysine and 2-oxoglutarate, the final step in the alpha-aminoadipate (AAA) pathway for lysin biosynthesis. The protein is Saccharopine dehydrogenase [NAD(+), L-lysine-forming] of Emericella nidulans (strain FGSC A4 / ATCC 38163 / CBS 112.46 / NRRL 194 / M139) (Aspergillus nidulans).